Here is a 436-residue protein sequence, read N- to C-terminus: 3-ketoacyl-CoA thiolase (436 aa).

The active-site Acyl-thioester intermediate is the cysteine 99. Catalysis depends on proton acceptor residues histidine 392 and cysteine 422.

It belongs to the thiolase-like superfamily. Thiolase family. In terms of assembly, heterotetramer of two alpha chains (FadJ) and two beta chains (FadI).

It localises to the cytoplasm. It carries out the reaction an acyl-CoA + acetyl-CoA = a 3-oxoacyl-CoA + CoA. It participates in lipid metabolism; fatty acid beta-oxidation. In terms of biological role, catalyzes the final step of fatty acid oxidation in which acetyl-CoA is released and the CoA ester of a fatty acid two carbons shorter is formed. The polypeptide is 3-ketoacyl-CoA thiolase (Salmonella paratyphi A (strain AKU_12601)).